We begin with the raw amino-acid sequence, 278 residues long: Digeranylgeranylglyceryl phosphate synthase (278 aa).

The next 8 membrane-spanning stretches (helical) occupy residues Met17 to Val37, Leu40 to Ile60, Leu91 to Val111, Ile129 to Ala149, Ile153 to Ile173, Leu204 to Ile224, Tyr226 to Ile246, and Ser257 to Phe277.

It belongs to the UbiA prenyltransferase family. DGGGP synthase subfamily. It depends on Mg(2+) as a cofactor.

The protein localises to the cell membrane. The catalysed reaction is sn-3-O-(geranylgeranyl)glycerol 1-phosphate + (2E,6E,10E)-geranylgeranyl diphosphate = 2,3-bis-O-(geranylgeranyl)-sn-glycerol 1-phosphate + diphosphate. Its pathway is membrane lipid metabolism; glycerophospholipid metabolism. Prenyltransferase that catalyzes the transfer of the geranylgeranyl moiety of geranylgeranyl diphosphate (GGPP) to the C2 hydroxyl of (S)-3-O-geranylgeranylglyceryl phosphate (GGGP). This reaction is the second ether-bond-formation step in the biosynthesis of archaeal membrane lipids. The protein is Digeranylgeranylglyceryl phosphate synthase of Methanococcus maripaludis (strain C5 / ATCC BAA-1333).